We begin with the raw amino-acid sequence, 555 residues long: Beta-caryophyllene synthase (555 aa).

Positions 313, 317, 456, and 464 each coordinate Mg(2+). A DDXXD motif motif is present at residues 313-317 (DDIYD).

Belongs to the terpene synthase family. It depends on Mg(2+) as a cofactor.

The enzyme catalyses (2E,6E)-farnesyl diphosphate = (+)-(E)-beta-caryophyllene + diphosphate. It participates in secondary metabolite biosynthesis; terpenoid biosynthesis. In terms of biological role, sesquiterpene synthase converting farnesyl diphosphate to beta-caryophyllene as the major product. In Phyla dulcis (Aztec sweet herb), this protein is Beta-caryophyllene synthase.